A 177-amino-acid polypeptide reads, in one-letter code: tRNA (cytidine(56)-2'-O)-methyltransferase (177 aa).

S-adenosyl-L-methionine is bound by residues leucine 84 and 109–113 (GAEKV).

The protein belongs to the aTrm56 family. Homodimer.

The protein localises to the cytoplasm. The enzyme catalyses cytidine(56) in tRNA + S-adenosyl-L-methionine = 2'-O-methylcytidine(56) in tRNA + S-adenosyl-L-homocysteine + H(+). Its function is as follows. Specifically catalyzes the AdoMet-dependent 2'-O-ribose methylation of cytidine at position 56 in tRNAs. This Methanosarcina barkeri (strain Fusaro / DSM 804) protein is tRNA (cytidine(56)-2'-O)-methyltransferase.